The sequence spans 102 residues: MSELKIRDPRDIILAPVVSEKSYGLLDQNTYTFVVKPTANKTEIKIAIEQIFGVKVTSVNTMNRKGKVRRTRTGVGKRPDTKRAIVTVAEGDRIDIFTGPVA.

This sequence belongs to the universal ribosomal protein uL23 family. As to quaternary structure, part of the 50S ribosomal subunit. Contacts protein L29, and trigger factor when it is bound to the ribosome.

In terms of biological role, one of the early assembly proteins it binds 23S rRNA. One of the proteins that surrounds the polypeptide exit tunnel on the outside of the ribosome. Forms the main docking site for trigger factor binding to the ribosome. The sequence is that of Large ribosomal subunit protein uL23 from Cutibacterium acnes (strain DSM 16379 / KPA171202) (Propionibacterium acnes).